A 144-amino-acid polypeptide reads, in one-letter code: MRQTTFVKHQEVKQKWFVIDAESKILGRLAAFVASRLRGKHYPHFTPNVDMGDKIIIINAEKILLTAKKEEQKLYYNHSGYPGGLRVRTAREMRAKKPIALLERAIYGMIPHTKLGDKQRKNLYVYSGSEHPHLGQNPEKLEVK.

Belongs to the universal ribosomal protein uL13 family. Part of the 50S ribosomal subunit.

Functionally, this protein is one of the early assembly proteins of the 50S ribosomal subunit, although it is not seen to bind rRNA by itself. It is important during the early stages of 50S assembly. The chain is Large ribosomal subunit protein uL13 from Mesomycoplasma hyopneumoniae (strain 7448) (Mycoplasma hyopneumoniae).